Consider the following 186-residue polypeptide: Adenine phosphoribosyltransferase (186 aa).

Belongs to the purine/pyrimidine phosphoribosyltransferase family. As to quaternary structure, homodimer.

It is found in the cytoplasm. The catalysed reaction is AMP + diphosphate = 5-phospho-alpha-D-ribose 1-diphosphate + adenine. The protein operates within purine metabolism; AMP biosynthesis via salvage pathway; AMP from adenine: step 1/1. Functionally, catalyzes a salvage reaction resulting in the formation of AMP, that is energically less costly than de novo synthesis. The chain is Adenine phosphoribosyltransferase from Xanthomonas axonopodis pv. citri (strain 306).